Here is a 142-residue protein sequence, read N- to C-terminus: Putative tyrosine phosphatase 123R (142 aa).

The Tyrosine-protein phosphatase domain occupies 2-137 (EPTKIVENLY…LAQFERWLNS (136 aa)). C81 acts as the Phosphocysteine intermediate in catalysis.

This sequence belongs to the protein-tyrosine phosphatase family.

The chain is Putative tyrosine phosphatase 123R from Invertebrate iridescent virus 6 (IIV-6).